We begin with the raw amino-acid sequence, 261 residues long: Kallikrein-1 (261 aa).

Positions 1 to 18 (MRFLILFLALSLGGIDAA) are cleaved as a signal peptide. Positions 19–24 (PPVQSR) are cleaved as a propeptide — activation peptide. Positions 25–258 (IVGGFNCEKN…FNTWIRETMA (234 aa)) constitute a Peptidase S1 domain. 5 cysteine pairs are disulfide-bonded: C31-C173, C50-C66, C152-C219, C184-C198, and C209-C234. H65 serves as the catalytic Charge relay system. N102 carries an N-linked (GlcNAc...) asparagine glycan. D120 serves as the catalytic Charge relay system. The Charge relay system role is filled by S213.

It belongs to the peptidase S1 family. Kallikrein subfamily.

It carries out the reaction Preferential cleavage of Arg-|-Xaa bonds in small molecule substrates. Highly selective action to release kallidin (lysyl-bradykinin) from kininogen involves hydrolysis of Met-|-Xaa or Leu-|-Xaa.. Glandular kallikreins cleave Met-Lys and Arg-Ser bonds in kininogen to release Lys-bradykinin. This chain is Kallikrein-1 (Klk1), found in Mus musculus (Mouse).